Consider the following 1226-residue polypeptide: Methionine synthase (1226 aa).

Positions 7–327 constitute a Hcy-binding domain; the sequence is KVQIEKQLSE…EHIRQMALVV (321 aa). Zn(2+)-binding residues include Cys-249, Cys-312, and Cys-313. The region spanning 358 to 619 is the Pterin-binding domain; that stretch reads FINVGERTNV…VPEDLREAVE (262 aa). Residues 652–746 form the B12-binding N-terminal domain; the sequence is SALEWRDWPV…FINASKEVGA (95 aa). Methylcob(III)alamin contacts are provided by residues Glu-696, 758 to 762, His-761, Ser-806, Thr-810, and Ala-862; that span reads GDVHD. Residues 748–883 form the B12-binding domain; sequence NGKILLATVK…SDELKPSFVE (136 aa). An AdoMet activation domain is found at 899-1226; it reads KQPRTKPVTL…AEKWLGPNLN (328 aa). Residues Asp-949, Arg-1137, and 1192–1193 contribute to the S-adenosyl-L-methionine site; that span reads YF.

Belongs to the vitamin-B12 dependent methionine synthase family. Requires methylcob(III)alamin as cofactor. It depends on Zn(2+) as a cofactor.

It carries out the reaction (6S)-5-methyl-5,6,7,8-tetrahydrofolate + L-homocysteine = (6S)-5,6,7,8-tetrahydrofolate + L-methionine. The protein operates within amino-acid biosynthesis; L-methionine biosynthesis via de novo pathway; L-methionine from L-homocysteine (MetH route): step 1/1. In terms of biological role, catalyzes the transfer of a methyl group from methyl-cobalamin to homocysteine, yielding enzyme-bound cob(I)alamin and methionine. Subsequently, remethylates the cofactor using methyltetrahydrofolate. The chain is Methionine synthase (metH) from Aliivibrio fischeri (strain ATCC 700601 / ES114) (Vibrio fischeri).